The primary structure comprises 364 residues: Capsular polysaccharide phosphotransferase fcs1 (364 aa).

This sequence belongs to the stealth family.

In terms of biological role, part of a group II capsule biosynthesis locus. The sequence is that of Capsular polysaccharide phosphotransferase fcs1 (fcs1) from Haemophilus influenzae.